Consider the following 476-residue polypeptide: Aspartyl/glutamyl-tRNA(Asn/Gln) amidotransferase subunit B (476 aa).

This sequence belongs to the GatB/GatE family. GatB subfamily. Heterotrimer of A, B and C subunits.

The catalysed reaction is L-glutamyl-tRNA(Gln) + L-glutamine + ATP + H2O = L-glutaminyl-tRNA(Gln) + L-glutamate + ADP + phosphate + H(+). It carries out the reaction L-aspartyl-tRNA(Asn) + L-glutamine + ATP + H2O = L-asparaginyl-tRNA(Asn) + L-glutamate + ADP + phosphate + 2 H(+). Allows the formation of correctly charged Asn-tRNA(Asn) or Gln-tRNA(Gln) through the transamidation of misacylated Asp-tRNA(Asn) or Glu-tRNA(Gln) in organisms which lack either or both of asparaginyl-tRNA or glutaminyl-tRNA synthetases. The reaction takes place in the presence of glutamine and ATP through an activated phospho-Asp-tRNA(Asn) or phospho-Glu-tRNA(Gln). In Albidiferax ferrireducens (strain ATCC BAA-621 / DSM 15236 / T118) (Rhodoferax ferrireducens), this protein is Aspartyl/glutamyl-tRNA(Asn/Gln) amidotransferase subunit B.